Consider the following 697-residue polypeptide: PHD finger protein At1g33420 (697 aa).

The PHD-type zinc-finger motif lies at 603-653 (KVDCKCGTKDDDGERMLACDGCGVWHHTRCIGINNADALPSKFLCFRCIEL).

The protein resides in the nucleus. This chain is PHD finger protein At1g33420, found in Arabidopsis thaliana (Mouse-ear cress).